The chain runs to 359 residues: Fc receptor-like A (359 aa).

Residues M1–A27 form the signal peptide. Ig-like C2-type domains are found at residues P70–S159 and P170–E257. Intrachain disulfides connect C99–C143 and C192–C240. Residues R259–P313 are disordered. Residues S279 to E288 show a composition bias toward low complexity. Residues A289–P299 show a composition bias toward pro residues.

As to quaternary structure, monomer or homodimer; disulfide-linked. Expressed specifically in primary and secondary lymphoid tissues like lymph node, spleen and tonsil. Specifically expressed in B-cells with a high level in normal germinal center B-cells, centroblasts and in a subset of diffuse large B-cell lymphomas. Highly expressed in bone marrow B-cells and weakly in earlier B lineage cells. Expressed in pre-germinal and germinal center B-cells in secondary lymphoid tissues. Also expressed in melanoma and melanocytes.

Its subcellular location is the cytoplasm. Functionally, may be implicated in B-cell differentiation and lymphomagenesis. This chain is Fc receptor-like A (FCRLA), found in Homo sapiens (Human).